The following is a 273-amino-acid chain: Formamidopyrimidine-DNA glycosylase (273 aa).

Catalysis depends on proline 2, which acts as the Schiff-base intermediate with DNA. The active-site Proton donor is glutamate 3. The active-site Proton donor; for beta-elimination activity is the lysine 58. The DNA site is built by histidine 91, arginine 109, and arginine 154. The segment at 239–273 (FVYARTGEPCRICNAPVRQIVQGQRSTFYCPNCQK) adopts an FPG-type zinc-finger fold. Arginine 263 acts as the Proton donor; for delta-elimination activity in catalysis.

This sequence belongs to the FPG family. As to quaternary structure, monomer. Zn(2+) serves as cofactor.

It carries out the reaction Hydrolysis of DNA containing ring-opened 7-methylguanine residues, releasing 2,6-diamino-4-hydroxy-5-(N-methyl)formamidopyrimidine.. The enzyme catalyses 2'-deoxyribonucleotide-(2'-deoxyribose 5'-phosphate)-2'-deoxyribonucleotide-DNA = a 3'-end 2'-deoxyribonucleotide-(2,3-dehydro-2,3-deoxyribose 5'-phosphate)-DNA + a 5'-end 5'-phospho-2'-deoxyribonucleoside-DNA + H(+). Its function is as follows. Involved in base excision repair of DNA damaged by oxidation or by mutagenic agents. Acts as a DNA glycosylase that recognizes and removes damaged bases. Has a preference for oxidized purines, such as 7,8-dihydro-8-oxoguanine (8-oxoG). Has AP (apurinic/apyrimidinic) lyase activity and introduces nicks in the DNA strand. Cleaves the DNA backbone by beta-delta elimination to generate a single-strand break at the site of the removed base with both 3'- and 5'-phosphates. The protein is Formamidopyrimidine-DNA glycosylase of Herminiimonas arsenicoxydans.